Consider the following 335-residue polypeptide: Ferrochelatase (335 aa).

Fe cation is bound by residues His207 and Glu288.

Belongs to the ferrochelatase family.

Its subcellular location is the cytoplasm. It catalyses the reaction heme b + 2 H(+) = protoporphyrin IX + Fe(2+). It participates in porphyrin-containing compound metabolism; protoheme biosynthesis; protoheme from protoporphyrin-IX: step 1/1. Catalyzes the ferrous insertion into protoporphyrin IX. The sequence is that of Ferrochelatase from Helicobacter pylori (strain G27).